Here is a 934-residue protein sequence, read N- to C-terminus: Phosphoenolpyruvate carboxylase (934 aa).

Active-site residues include H161 and K593.

Belongs to the PEPCase type 1 family. The cofactor is Mg(2+).

It catalyses the reaction oxaloacetate + phosphate = phosphoenolpyruvate + hydrogencarbonate. In terms of biological role, forms oxaloacetate, a four-carbon dicarboxylic acid source for the tricarboxylic acid cycle. The polypeptide is Phosphoenolpyruvate carboxylase (ppc) (Mycobacterium leprae (strain TN)).